The sequence spans 172 residues: Large ribosomal subunit protein bL17 (172 aa).

The disordered stretch occupies residues 127–172 (KAAKQDRAKRVKGSKKVTGDVAPAVAPVPSAPAETQEEAKAPESAE). The span at 147–159 (VAPAVAPVPSAPA) shows a compositional bias: low complexity. Residues 163 to 172 (EEAKAPESAE) are compositionally biased toward basic and acidic residues.

This sequence belongs to the bacterial ribosomal protein bL17 family. As to quaternary structure, part of the 50S ribosomal subunit. Contacts protein L32.

This Chlorobium luteolum (strain DSM 273 / BCRC 81028 / 2530) (Pelodictyon luteolum) protein is Large ribosomal subunit protein bL17.